Reading from the N-terminus, the 47-residue chain is Bacteriocin curvaticin DN317 (47 aa).

This sequence belongs to the bacteriocin class IIA/YGNGV family.

The protein resides in the secreted. Functionally, has bactericidal activity against various Gram-negative Campylobacter, and the Gram-positive L.monocytogenes and B.subtilis. In vitro, inhibits C.jejuni strain ATCC 33560 (MIC=27.3 ug/ml). This is Bacteriocin curvaticin DN317 from Latilactobacillus curvatus (Lactobacillus curvatus).